Here is a 152-residue protein sequence, read N- to C-terminus: MVKRVQLVLTKDVSKLGRSGDLVDVAPGYARNYLIPQSLATHATPGILKQVERRREQERQRQLELRQQALEQKEALEKVGSLKIAKQVGENEAIFGTVTSQDVADAIQAATSQEVDRRGITIPDIGKLGTYKAEIKLFSDVTAQIDIEVVAS.

Belongs to the bacterial ribosomal protein bL9 family.

Functionally, binds to the 23S rRNA. This Trichormus variabilis (strain ATCC 29413 / PCC 7937) (Anabaena variabilis) protein is Large ribosomal subunit protein bL9.